Consider the following 184-residue polypeptide: MTSFEDADTEETVTCLQMTVYHPGQLQCGIFQSISFNREKLPSSEVVKFGRNSNICHYTFQDKQVSRVQFSLQLFKKFNSSVLSFEIKNMSKKTNLIVDSRELGYLNKMDLPYRCMVRFGEYQFLMEKEDGESLEFFETQFILSPRSLLQENNWPPHRPIPEYGTYSLCSSQSSSPTEMDENES.

At threonine 9 the chain carries Phosphothreonine; by ALPK1. An FHA domain is found at 47–103 (VKFGRNSNICHYTFQDKQVSRVQFSLQLFKKFNSSVLSFEIKNMSKKTNLIVDSREL). Positions 165–184 (TYSLCSSQSSSPTEMDENES) are disordered. The segment covering 167–177 (SLCSSQSSSPT) has biased composition (polar residues).

This sequence belongs to the TIFA family. In terms of assembly, homooligomer; homooligomerizes following phosphorylation at Thr-9. Interacts with IRAK1, TRAF2 and TRAF6. Interacts with TIFAB; binding to TIFAB inhibits TRAF6 activation, possibly by inducing a conformational change in TIFA. Interacts with ZCCHC11; binding to ZCCHC11 suppresses the TRAF6-dependent activation of NF-kappa-B. Post-translationally, phosphorylated at Thr-9 following detection of ADP-D-glycero-beta-D-manno-heptose (ADP-Heptose) by ALPK1. Phosphorylation at Thr-9 by ALPK1 leads to the formation of an intermolecular binding between the FHA domain and phosphorylated Thr-9, promoting TIFA oligomerization and TIFA-mediated NF-kappa-B activation.

The protein resides in the cytoplasm. In terms of biological role, adapter molecule that plays a key role in the activation of pro-inflammatory NF-kappa-B signaling following detection of bacterial pathogen-associated molecular pattern metabolites (PAMPs). Promotes activation of an innate immune response by inducing the oligomerization and polyubiquitination of TRAF6, which leads to the activation of TAK1 and IKK through a proteasome-independent mechanism. TIFA-dependent innate immune response is triggered by ADP-D-glycero-beta-D-manno-heptose (ADP-Heptose), a potent PAMP present in all Gram-negative and some Gram-positive bacteria: ADP-Heptose is recognized by ALPK1, which phosphorylates TIFA at Thr-9, leading to TIFA homooligomerization and subsequent activation of pro-inflammatory NF-kappa-B signaling. This chain is TRAF-interacting protein with FHA domain-containing protein A, found in Homo sapiens (Human).